The sequence spans 243 residues: Late expression factor 1 (243 aa).

The protein belongs to the baculoviridae LEF-1 family.

Required for late and very late gene expression. The sequence is that of Late expression factor 1 (LEF-1) from Orgyia pseudotsugata multicapsid polyhedrosis virus (OpMNPV).